Consider the following 79-residue polypeptide: Large ribosomal subunit protein bL28 (79 aa).

Belongs to the bacterial ribosomal protein bL28 family.

The sequence is that of Large ribosomal subunit protein bL28 from Blochmanniella floridana.